The primary structure comprises 391 residues: Bifunctional enzyme IspD/IspF (391 aa).

The 2-C-methyl-D-erythritol 4-phosphate cytidylyltransferase stretch occupies residues 1–230; it reads MLAAGRGKRA…KKKMQMFPDI (230 aa). The segment at 231-391 is 2-C-methyl-D-erythritol 2,4-cyclodiphosphate synthase; that stretch reads RTGNGYDVHS…TVLYPGEIPK (161 aa). Positions 237 and 239 each coordinate a divalent metal cation. Residues 237-239 and 263-264 contribute to the 4-CDP-2-C-methyl-D-erythritol 2-phosphate site; these read DVH and HS. His-271 contacts a divalent metal cation. Residues 285-287, 361-364, Phe-368, and Arg-371 contribute to the 4-CDP-2-C-methyl-D-erythritol 2-phosphate site; these read DIG and TTNE.

This sequence in the N-terminal section; belongs to the IspD/TarI cytidylyltransferase family. IspD subfamily. The protein in the C-terminal section; belongs to the IspF family. The cofactor is a divalent metal cation.

The catalysed reaction is 2-C-methyl-D-erythritol 4-phosphate + CTP + H(+) = 4-CDP-2-C-methyl-D-erythritol + diphosphate. It catalyses the reaction 4-CDP-2-C-methyl-D-erythritol 2-phosphate = 2-C-methyl-D-erythritol 2,4-cyclic diphosphate + CMP. The protein operates within isoprenoid biosynthesis; isopentenyl diphosphate biosynthesis via DXP pathway; isopentenyl diphosphate from 1-deoxy-D-xylulose 5-phosphate: step 2/6. It functions in the pathway isoprenoid biosynthesis; isopentenyl diphosphate biosynthesis via DXP pathway; isopentenyl diphosphate from 1-deoxy-D-xylulose 5-phosphate: step 4/6. Functionally, bifunctional enzyme that catalyzes the formation of 4-diphosphocytidyl-2-C-methyl-D-erythritol from CTP and 2-C-methyl-D-erythritol 4-phosphate (MEP) (IspD), and catalyzes the conversion of 4-diphosphocytidyl-2-C-methyl-D-erythritol 2-phosphate (CDP-ME2P) to 2-C-methyl-D-erythritol 2,4-cyclodiphosphate (ME-CPP) with a corresponding release of cytidine 5-monophosphate (CMP) (IspF). This is Bifunctional enzyme IspD/IspF from Bartonella quintana (strain Toulouse) (Rochalimaea quintana).